Here is a 283-residue protein sequence, read N- to C-terminus: K88 fimbrial protein AC (283 aa).

The N-terminal stretch at 1–21 (MKKTLIALAIAASAASGMAHA) is a signal peptide.

It belongs to the fimbrial K88 protein family. As to quaternary structure, K88 fimbria, 0.1-1 micrometer in length and 7 nanometers in diameter, is composed of about 100 identical subunits.

The protein resides in the fimbrium. In terms of biological role, K88 major fimbrial subunit. Fimbriae (also called pili), are polar filaments radiating from the surface of the bacterium to a length of 0.5-1.5 micrometers and numbering 100-300 per cell. They enable bacteria to colonize the epithelium of specific host organs. The sequence is that of K88 fimbrial protein AC (faeG) from Escherichia coli.